Consider the following 646-residue polypeptide: A-kinase anchor protein 8-like (646 aa).

Residues 1–268 (MSYTGFVQGS…MRRTWKTWTT (268 aa)) form a sufficient for activation of CTE-mediated expression region. Arg208 carries the post-translational modification Asymmetric dimethylarginine; alternate. Residue Arg208 is modified to Omega-N-methylarginine; alternate. Residues Arg217, Arg237, and Arg247 each carry the omega-N-methylarginine modification. Lys257 carries the post-translational modification N6-acetyllysine. The segment at 264–381 (KTWTTADFRT…QDKQKKRQRD (118 aa)) is disordered. Residue Thr267 is modified to Phosphothreonine. The Nuclear localization signal motif lies at 274-279 (KKKKRK). The Nuclear export signal (NES) motif lies at 280 to 296 (QGGSPDEPDSKATRTDC). Position 283 is a phosphoserine (Ser283). The span at 287 to 296 (PDSKATRTDC) shows a compositional bias: basic and acidic residues. Thr292 bears the Phosphothreonine mark. Ser297 is subject to Phosphoserine. Residues 298 to 314 (DNSDSDNDEGTEGEATE) show a composition bias toward acidic residues. The span at 337-349 (EDGREEGKEDPEK) shows a compositional bias: basic and acidic residues. A Nuclear localization signal motif is present at residues 362–364 (KRK). 2 consecutive C2H2 AKAP95-type zinc fingers follow at residues 391–413 (CSLCKYRTFYEDEMASHLDSKFH) and 484–507 (CAACDLFIPMQFGIIQKHLKTMDH). A disordered region spans residues 545–646 (GENPFTDSPE…DDEEGGGGAP (102 aa)). Ser552 bears the Phosphoserine mark. The segment covering 552-563 (SPEEEKEQEEAE) has biased composition (acidic residues). Residues 564–586 (GGALDEGAQGEAAGISEGAEGVP) are compositionally biased toward low complexity. Residues 587 to 607 (AQPPVPPEPAPGAVSPPPPPP) show a composition bias toward pro residues. The span at 634 to 646 (DVEDDEEGGGGAP) shows a compositional bias: acidic residues.

The protein belongs to the AKAP95 family. As to quaternary structure, interacts (via N-terminus) with DHX9 (via RGG region). Interacts with TMPO isoform Beta, PRPF40A, RNF43, lamin-B. Interacts with HDAC3; increased during mitosis. Interacts with EBV EBNA-LP. Interacts with HIV-1 reverse transcriptase/ribonuclease H. In terms of processing, phosphorylated on serine or threonine residues possibly by PKA; probably modulating the interaction with TMPO isoform Beta. Ubiquitously expressed. Expressed in the brain cortex (at protein level).

It is found in the nucleus. The protein localises to the nucleus matrix. It localises to the nucleus speckle. The protein resides in the PML body. Its subcellular location is the cytoplasm. Its function is as follows. Could play a role in constitutive transport element (CTE)-mediated gene expression by association with DHX9. Increases CTE-dependent nuclear unspliced mRNA export. Proposed to target PRKACA to the nucleus but does not seem to be implicated in the binding of regulatory subunit II of PKA. May be involved in nuclear envelope breakdown and chromatin condensation. May be involved in anchoring nuclear membranes to chromatin in interphase and in releasing membranes from chromating at mitosis. May regulate the initiation phase of DNA replication when associated with TMPO isoform Beta. Required for cell cycle G2/M transition and histone deacetylation during mitosis. In mitotic cells recruits HDAC3 to the vicinity of chromatin leading to deacetylation and subsequent phosphorylation at 'Ser-10' of histone H3; in this function seems to act redundantly with AKAP8. May be involved in regulation of pre-mRNA splicing. (Microbial infection) In case of EBV infection, may target PRKACA to EBNA-LP-containing nuclear sites to modulate transcription from specific promoters. Functionally, (Microbial infection) Can synergize with DHX9 to activate the CTE-mediated gene expression of type D retroviruses. In terms of biological role, (Microbial infection) In case of HIV-1 infection, involved in the DHX9-promoted annealing of host tRNA(Lys3) to viral genomic RNA as a primer in reverse transcription; in vitro negatively regulates DHX9 annealing activity. The polypeptide is A-kinase anchor protein 8-like (AKAP8L) (Homo sapiens (Human)).